Reading from the N-terminus, the 845-residue chain is Ribonucleoside-diphosphate reductase subunit alpha (845 aa).

The ATP-cone domain occupies 1–98 (MHIIKRNGEP…LYRDDRTKKR (98 aa)). Residues Thr-303, 318 to 319 (SC), Gly-347, 534 to 538 (NLCTE), and 725 to 729 (PTSST) contribute to the substrate site. Cys-319 and Cys-574 are oxidised to a cystine. The Proton acceptor role is filled by Asn-534. Cys-536 serves as the catalytic Cysteine radical intermediate. The active-site Proton acceptor is the Glu-538.

It belongs to the ribonucleoside diphosphate reductase large chain family. Tetramer of two alpha and two beta subunits.

It carries out the reaction a 2'-deoxyribonucleoside 5'-diphosphate + [thioredoxin]-disulfide + H2O = a ribonucleoside 5'-diphosphate + [thioredoxin]-dithiol. Its activity is regulated as follows. Under complex allosteric control mediated by deoxynucleoside triphosphates and ATP binding. The type of nucleotide bound at the specificity site determines substrate preference. It seems probable that ATP makes the enzyme reduce CDP and UDP, dGTP favors ADP reduction and dTTP favors GDP reduction. Provides the precursors necessary for DNA synthesis. Catalyzes the biosynthesis of deoxyribonucleotides from the corresponding ribonucleotides. This Treponema pallidum (strain Nichols) protein is Ribonucleoside-diphosphate reductase subunit alpha (nrdA).